We begin with the raw amino-acid sequence, 697 residues long: Zinc finger protein 12 (697 aa).

A Glycyl lysine isopeptide (Lys-Gly) (interchain with G-Cter in SUMO2) cross-link involves residue Lys3. The 72-residue stretch at 8 to 79 (VSFKDVAVDF…EGEFLLQSYP (72 aa)) folds into the KRAB domain. Residues Lys98, Lys179, Lys182, Lys209, Lys215, Lys224, Lys239, and Lys267 each participate in a glycyl lysine isopeptide (Lys-Gly) (interchain with G-Cter in SUMO2) cross-link. C2H2-type zinc fingers lie at residues 269 to 291 (YECS…QRTH) and 297 to 319 (YECN…QRTH). Glycyl lysine isopeptide (Lys-Gly) (interchain with G-Cter in SUMO2) cross-links involve residues Lys309, Lys323, Lys337, and Lys365. C2H2-type zinc fingers lie at residues 325 to 347 (YECN…QRTH), 353 to 375 (YECS…QRTH), 381 to 403 (YVCH…QKIH), 409 to 431 (YKCS…LRTH), 437 to 459 (YECN…YRTH), 465 to 487 (YECN…QRVH), 493 to 515 (YECN…HRTH), and 521 to 543 (YECS…RRIH). Glycyl lysine isopeptide (Lys-Gly) (interchain with G-Cter in SUMO2) cross-links involve residues Lys544 and Lys547. 5 consecutive C2H2-type zinc fingers follow at residues 549-571 (YECY…HRIH), 577-599 (YECS…QRTH), 605-627 (YECY…HRIH), 633-655 (FECN…YRTH), and 661-683 (YECT…QRIH).

The protein belongs to the krueppel C2H2-type zinc-finger protein family. As to expression, widely expressed in various adult tissues and embryonic developmental stages (isoform 3).

It localises to the nucleus. Its function is as follows. Transcriptional repressor which suppresses activation protein 1 (AP-1)- and serum response element (SRE)-mediated transcriptional activity. The protein is Zinc finger protein 12 (ZNF12) of Homo sapiens (Human).